Consider the following 101-residue polypeptide: NAD(P)H-quinone oxidoreductase subunit 4L, chloroplastic (101 aa).

Transmembrane regions (helical) follow at residues 2–22 (MLEHVLVLSAYLFSVGLYGLI), 32–52 (MCLELILNAVNINFVTFSDFF), and 61–81 (IFSIFVIAIAAAEAAIGLAIV).

The protein belongs to the complex I subunit 4L family. In terms of assembly, NDH is composed of at least 16 different subunits, 5 of which are encoded in the nucleus.

Its subcellular location is the plastid. The protein localises to the chloroplast thylakoid membrane. It catalyses the reaction a plastoquinone + NADH + (n+1) H(+)(in) = a plastoquinol + NAD(+) + n H(+)(out). It carries out the reaction a plastoquinone + NADPH + (n+1) H(+)(in) = a plastoquinol + NADP(+) + n H(+)(out). NDH shuttles electrons from NAD(P)H:plastoquinone, via FMN and iron-sulfur (Fe-S) centers, to quinones in the photosynthetic chain and possibly in a chloroplast respiratory chain. The immediate electron acceptor for the enzyme in this species is believed to be plastoquinone. Couples the redox reaction to proton translocation, and thus conserves the redox energy in a proton gradient. This Panax ginseng (Korean ginseng) protein is NAD(P)H-quinone oxidoreductase subunit 4L, chloroplastic.